Here is a 387-residue protein sequence, read N- to C-terminus: Lymphocyte transmembrane adapter 1 (387 aa).

The Extracellular portion of the chain corresponds to 1–37 (MDVTTSAWSETTRRISEPSTLQGTLGSLDKAEDHSSS). Residues 38–58 (IFSGFAALLAILLVVAVICVL) form a helical; Signal-anchor for type III membrane protein membrane-spanning segment. Residues 59 to 387 (WCCGKRKKRQ…VCAAEAGARG (329 aa)) are Cytoplasmic-facing. The disordered stretch occupies residues 114–136 (VSTESLLSRNSDSPSSEHVPSRA). The span at 118 to 129 (SLLSRNSDSPSS) shows a compositional bias: low complexity. The residue at position 195 (tyrosine 195) is a Phosphotyrosine. Residues 230-268 (SEEIDEGCGNASDCTSLGSPGTENSDPLSDGEGSSQTSN) are disordered. The span at 241–268 (SDCTSLGSPGTENSDPLSDGEGSSQTSN) shows a compositional bias: polar residues. Phosphotyrosine occurs at positions 270 and 296. The interval 294–387 (RDYENVPPGP…VCAAEAGARG (94 aa)) is disordered. Over residues 319–329 (DHVEGRTDGPE) the composition is skewed to basic and acidic residues. A compositionally biased stretch (acidic residues) spans 360-369 (PWEDAEETSS). Tyrosine 375 carries the phosphotyrosine modification.

When phosphorylated, interacts with GRB2, PIK3R1 and GRAP2. Phosphorylated on tyrosines upon TCR or BCR activation; which leads to the recruitment of GRB2, PIK3R1 and GRAP2.

It localises to the cell membrane. Functionally, negatively regulates TCR (T-cell antigen receptor)-mediated signaling in T-cells and BCR (B-cell antigen receptor)-mediated signaling in B-cells. This Bos taurus (Bovine) protein is Lymphocyte transmembrane adapter 1 (LAX1).